The chain runs to 271 residues: Phosphatidate cytidylyltransferase (271 aa).

8 helical membrane passes run 12–32, 53–73, 75–95, 111–131, 136–156, 174–194, 199–219, and 251–271; these read LLPIALGGFFLLEGAFFALFI, FGRVAYAATVAVLMVALYHLP, LAGAVLLLALVWWTLATVLVL, LGMGLLILLPAWQGLVLLKQW, GLIIAVMVLVWGADIGAYFSG, WEGVYGGLAASLAITLAVGLY, LGALLLALLGAALVVFVSIVG, and SLTAAIPVFAALLWAAGWGAP.

This sequence belongs to the CDS family.

It localises to the cell inner membrane. The enzyme catalyses a 1,2-diacyl-sn-glycero-3-phosphate + CTP + H(+) = a CDP-1,2-diacyl-sn-glycerol + diphosphate. It participates in phospholipid metabolism; CDP-diacylglycerol biosynthesis; CDP-diacylglycerol from sn-glycerol 3-phosphate: step 3/3. This is Phosphatidate cytidylyltransferase (cdsA) from Pseudomonas aeruginosa (strain ATCC 15692 / DSM 22644 / CIP 104116 / JCM 14847 / LMG 12228 / 1C / PRS 101 / PAO1).